Reading from the N-terminus, the 777-residue chain is 1,4-alpha-glucan branching enzyme GlgB (777 aa).

Asp408 serves as the catalytic Nucleophile. Catalysis depends on Glu461, which acts as the Proton donor.

This sequence belongs to the glycosyl hydrolase 13 family. GlgB subfamily. Monomer.

The catalysed reaction is Transfers a segment of a (1-&gt;4)-alpha-D-glucan chain to a primary hydroxy group in a similar glucan chain.. The protein operates within glycan biosynthesis; glycogen biosynthesis. Its function is as follows. Catalyzes the formation of the alpha-1,6-glucosidic linkages in glycogen by scission of a 1,4-alpha-linked oligosaccharide from growing alpha-1,4-glucan chains and the subsequent attachment of the oligosaccharide to the alpha-1,6 position. The protein is 1,4-alpha-glucan branching enzyme GlgB of Actinobacillus pleuropneumoniae serotype 5b (strain L20).